The chain runs to 356 residues: Phosphate acyltransferase (356 aa).

This sequence belongs to the PlsX family. Homodimer. Probably interacts with PlsY.

Its subcellular location is the cytoplasm. The enzyme catalyses a fatty acyl-[ACP] + phosphate = an acyl phosphate + holo-[ACP]. It participates in lipid metabolism; phospholipid metabolism. Functionally, catalyzes the reversible formation of acyl-phosphate (acyl-PO(4)) from acyl-[acyl-carrier-protein] (acyl-ACP). This enzyme utilizes acyl-ACP as fatty acyl donor, but not acyl-CoA. This Shigella boydii serotype 4 (strain Sb227) protein is Phosphate acyltransferase.